A 1279-amino-acid chain; its full sequence is ATP-dependent helicase/nuclease subunit A (1279 aa).

The UvrD-like helicase ATP-binding domain occupies 4-499 (TKWTDEQRQA…VKLFKNFRSR (496 aa)). Residue 25-32 (AGAGAGKT) coordinates ATP. Residues 526–853 (EEALKVGASY…RIMSIHKSKG (328 aa)) form the UvrD-like helicase C-terminal domain.

Belongs to the helicase family. AddA subfamily. In terms of assembly, heterodimer of AddA and AddB/RexB. Requires Mg(2+) as cofactor.

The enzyme catalyses Couples ATP hydrolysis with the unwinding of duplex DNA by translocating in the 3'-5' direction.. It catalyses the reaction ATP + H2O = ADP + phosphate + H(+). Functionally, the heterodimer acts as both an ATP-dependent DNA helicase and an ATP-dependent, dual-direction single-stranded exonuclease. Recognizes the chi site generating a DNA molecule suitable for the initiation of homologous recombination. The AddA nuclease domain is required for chi fragment generation; this subunit has the helicase and 3' -&gt; 5' nuclease activities. This is ATP-dependent helicase/nuclease subunit A from Clostridium botulinum (strain Loch Maree / Type A3).